The following is a 172-amino-acid chain: Translationally-controlled tumor protein (172 aa).

Residues 1–172 enclose the TCTP domain; it reads MIIYRDLISH…FKDGLEMEKC (172 aa). Ser-46 is subject to Phosphoserine; by PLK1. Ser-53 bears the Phosphoserine mark. Phosphoserine; by PLK1 is present on Ser-64. Positions 70-172 are required for reduction of TSC22D1 protein stability; it reads VDIVMNHHLQ…FKDGLEMEKC (103 aa).

The protein belongs to the TCTP family. In terms of assembly, homodimer. Interacts with STEAP3. Interacts with TSC22D1; interaction results in the destabilization of TSC22D1 protein. As to expression, found in several healthy and tumoral cells including erythrocytes, hepatocytes, macrophages, platelets, keratinocytes, erythroleukemia cells, gliomas, melanomas, hepatoblastomas, and lymphomas. It cannot be detected in kidney and renal cell carcinoma (RCC). Expressed in placenta and prostate.

The protein localises to the cytoplasm. Involved in calcium binding and microtubule stabilization. Acts as a negative regulator of TSC22D1-mediated apoptosis, via interaction with and destabilization of TSC22D1 protein. In Homo sapiens (Human), this protein is Translationally-controlled tumor protein (TPT1).